The following is a 219-amino-acid chain: Probable GTP-binding protein EngB (219 aa).

The 175-residue stretch at 31–205 (VGVEIAFAGR…LAILNEWCHP (175 aa)) folds into the EngB-type G domain. GTP contacts are provided by residues 39–46 (GRSNAGKS), 66–70 (GRTQL), 84–87 (DLPG), 151–154 (TKSD), and 184–186 (FSS). Mg(2+) contacts are provided by Ser46 and Thr68.

Belongs to the TRAFAC class TrmE-Era-EngA-EngB-Septin-like GTPase superfamily. EngB GTPase family. Requires Mg(2+) as cofactor.

In terms of biological role, necessary for normal cell division and for the maintenance of normal septation. The chain is Probable GTP-binding protein EngB from Shewanella baltica (strain OS223).